A 251-amino-acid polypeptide reads, in one-letter code: Small ribosomal subunit protein uS2B (251 aa).

Position 2 is an N-acetylserine (Ser-2). A compositionally biased stretch (low complexity) spans 214–225 (AVEEASATGATE). Residues 214-251 (AVEEASATGATEEATEEATEETTEATEWAEDNTENATW) are disordered. A compositionally biased stretch (acidic residues) spans 226–251 (EATEEATEETTEATEWAEDNTENATW).

Belongs to the universal ribosomal protein uS2 family. In terms of assembly, component of the small ribosomal subunit. Mature ribosomes consist of a small (40S) and a large (60S) subunit. The 40S subunit contains about 33 different proteins and 1 molecule of RNA (18S). The 60S subunit contains about 49 different proteins and 3 molecules of RNA (25S, 5.8S and 5S). Interacts with RPS21.

Its subcellular location is the cytoplasm. Required for the assembly and/or stability of the 40S ribosomal subunit. Required for the processing of the 20S rRNA-precursor to mature 18S rRNA in a late step of the maturation of 40S ribosomal subunits. This Vanderwaltozyma polyspora (strain ATCC 22028 / DSM 70294 / BCRC 21397 / CBS 2163 / NBRC 10782 / NRRL Y-8283 / UCD 57-17) (Kluyveromyces polysporus) protein is Small ribosomal subunit protein uS2B.